A 176-amino-acid polypeptide reads, in one-letter code: Disulfide bond formation protein B (176 aa).

At 1–14 the chain is on the cytoplasmic side; it reads MLRFLNRCSRGRGA. A helical transmembrane segment spans residues 15-31; the sequence is WLLLAFTALALELTALY. Topologically, residues 32 to 49 are periplasmic; that stretch reads FQHVMLLKPCVLCIYQRS. An intrachain disulfide couples Cys41 to Cys44. The helical transmembrane segment at 50-65 threads the bilayer; the sequence is ALWGVFAAGIVGAIAP. Residues 66-71 are Cytoplasmic-facing; that stretch reads SSLLRY. The helical transmembrane segment at 72–89 threads the bilayer; sequence PAIALWIYSSYEGIRLAW. Topologically, residues 90–144 are periplasmic; it reads KHTDILLNPSPFTTCDFFVSFPSWLPLDKWLPAIFNATGDCSERQWSFLSMEMPQ. Cys104 and Cys130 are joined by a disulfide. A helical transmembrane segment spans residues 145–163; sequence WLLGIFAAYLLIAVLVLIA. The Cytoplasmic segment spans residues 164–176; sequence QPFRSKRRDLFSR.

The protein belongs to the DsbB family.

Its subcellular location is the cell inner membrane. In terms of biological role, required for disulfide bond formation in some periplasmic proteins. Acts by oxidizing the DsbA protein. The protein is Disulfide bond formation protein B of Pectobacterium atrosepticum (strain SCRI 1043 / ATCC BAA-672) (Erwinia carotovora subsp. atroseptica).